The primary structure comprises 510 residues: UDP-N-acetylmuramoyl-tripeptide--D-alanyl-D-alanine ligase (510 aa).

136 to 142 (GSSGKTS) is an ATP binding site.

The protein belongs to the MurCDEF family. MurF subfamily.

The protein resides in the cytoplasm. It catalyses the reaction D-alanyl-D-alanine + UDP-N-acetyl-alpha-D-muramoyl-L-alanyl-gamma-D-glutamyl-meso-2,6-diaminopimelate + ATP = UDP-N-acetyl-alpha-D-muramoyl-L-alanyl-gamma-D-glutamyl-meso-2,6-diaminopimeloyl-D-alanyl-D-alanine + ADP + phosphate + H(+). It participates in cell wall biogenesis; peptidoglycan biosynthesis. Its function is as follows. Involved in cell wall formation. Catalyzes the final step in the synthesis of UDP-N-acetylmuramoyl-pentapeptide, the precursor of murein. The sequence is that of UDP-N-acetylmuramoyl-tripeptide--D-alanyl-D-alanine ligase from Mycobacterium tuberculosis (strain CDC 1551 / Oshkosh).